Reading from the N-terminus, the 246-residue chain is Transcriptional regulatory protein LytR (246 aa).

One can recognise a Response regulatory domain in the interval 2-116 (KALIIDDEPL…RIEQAVNKVR (115 aa)). The residue at position 53 (Asp53) is a 4-aspartylphosphate. The region spanning 141–245 (LPVEIDDKIH…MKDFKASIGL (105 aa)) is the HTH LytTR-type domain.

In terms of assembly, homodimer; when phosphorylated. Phosphorylated and dephosphorylated by LytS.

It localises to the cytoplasm. Functionally, member of the two-component regulatory system LytR/LytS that regulates genes involved in autolysis, programmed cell death, biofilm formation and cell wall metabolism. Also participates in sensing and responding to host defense cationic antimicrobial peptides (HDPs). Upon phosphorylation by LytS, functions as a transcription regulator by direct binding to promoter regions of target genes including lrgA and lrgB, to positively regulate their expression. The chain is Transcriptional regulatory protein LytR (lytR) from Staphylococcus aureus (strain bovine RF122 / ET3-1).